Consider the following 650-residue polypeptide: Putative polypeptide N-acetylgalactosaminyltransferase 9 (650 aa).

Topologically, residues 1–11 (MAFIWRRRSTT) are cytoplasmic. Residues 12–31 (IVKLVAFALAIWFCIAFLVY) traverse the membrane as a helical; Signal-anchor for type II membrane protein segment. Residues 32-650 (TDDTRRRAAQ…TLENYDSSKL (619 aa)) lie on the Lumenal side of the membrane. Residues 84 to 154 (NVIGGGGQKQ…NPGELGKPVR (71 aa)) are disordered. Basic and acidic residues predominate over residues 107 to 136 (HKADLQAERMRKKAAEQPKKKPQEDSKKVI). 5 disulfide bridges follow: Cys-198/Cys-432, Cys-423/Cys-499, Cys-535/Cys-554, Cys-577/Cys-590, and Cys-616/Cys-631. The tract at residues 208–317 (LPKTDVIICF…EGWLEPLLDR (110 aa)) is catalytic subdomain A. Substrate-binding residues include Cys-216, Asp-249, and Arg-278. Asp-301 contacts Mn(2+). The substrate site is built by Ser-302 and His-303. His-303 is a binding site for Mn(2+). Residues Asn-321 and Asn-373 are each glycosylated (N-linked (GlcNAc...) asparagine). The segment at 378–440 (PVYSPTMAGG…PCSHVGHIFR (63 aa)) is catalytic subdomain B. Residue His-437 coordinates Mn(2+). 2 residues coordinate substrate: Arg-440 and Tyr-445. Positions 521 to 643 (AHGEIRNLGY…SLSRQQWTLE (123 aa)) constitute a Ricin B-type lectin domain.

Belongs to the glycosyltransferase 2 family. GalNAc-T subfamily. In terms of assembly, isoform A forms homotetramer. Isoform B forms homodimer. Mn(2+) is required as a cofactor.

It localises to the golgi apparatus membrane. The catalysed reaction is L-seryl-[protein] + UDP-N-acetyl-alpha-D-galactosamine = a 3-O-[N-acetyl-alpha-D-galactosaminyl]-L-seryl-[protein] + UDP + H(+). It catalyses the reaction L-threonyl-[protein] + UDP-N-acetyl-alpha-D-galactosamine = a 3-O-[N-acetyl-alpha-D-galactosaminyl]-L-threonyl-[protein] + UDP + H(+). It functions in the pathway protein modification; protein glycosylation. Functionally, catalyzes the initial reaction in O-linked oligosaccharide biosynthesis, the transfer of an N-acetyl-D-galactosamine residue to a serine or threonine residue on the protein receptor. It can both act as a peptide transferase that transfers GalNAc onto unmodified peptide substrates, and as a glycopeptide transferase that requires the prior addition of a GalNAc on a peptide before adding additional GalNAc moieties. Its function is as follows. N-acetylgalactosaminyltransferase which preferentially O-glycosylates negatively charge substrates. O-glycosylates mucin-like protein Sgs3 in the salivary gland but to a lesser extent than isoform B. By regulating the O-glycosylation of secretory cargo proteins plays a role in the morphology and maturation of salivary gland secretory granules. N-acetylgalactosaminyltransferase which preferentially O-glycosylates positively charge substrates. O-glycosylates mucin-like protein Sgs3 in the salivary gland. By regulating the O-glycosylation of secretory cargo proteins, plays a role in the morphology and maturation of salivary gland secretory granules. This Drosophila melanogaster (Fruit fly) protein is Putative polypeptide N-acetylgalactosaminyltransferase 9.